A 507-amino-acid polypeptide reads, in one-letter code: Probable bifunctional methylthioribulose-1-phosphate dehydratase/enolase-phosphatase E1 (507 aa).

Position 2 is an N-acetylalanine (alanine 2). Residues 2 to 237 (AVAAAAMIGL…AIKLHQLGLD (236 aa)) are methylthioribulose-1-phosphate dehydratase. Cysteine 109 contributes to the substrate binding site. Zn(2+)-binding residues include histidine 127 and histidine 129. Residue glutamate 152 is the Proton donor/acceptor of the active site. Zn(2+) is bound at residue histidine 202. The interval 268-507 (IVLDIEGTTT…FKTVTSFSQI (240 aa)) is enolase-phosphatase E1. 2 residues coordinate Mg(2+): aspartate 271 and glutamate 273. Substrate contacts are provided by residues 406–407 (SS) and lysine 440. Aspartate 466 provides a ligand contact to Mg(2+).

In the N-terminal section; belongs to the aldolase class II family. MtnB subfamily. This sequence in the C-terminal section; belongs to the HAD-like hydrolase superfamily. MasA/MtnC family. The cofactor is Zn(2+). Requires Mg(2+) as cofactor.

The catalysed reaction is 5-(methylsulfanyl)-D-ribulose 1-phosphate = 5-methylsulfanyl-2,3-dioxopentyl phosphate + H2O. It catalyses the reaction 5-methylsulfanyl-2,3-dioxopentyl phosphate + H2O = 1,2-dihydroxy-5-(methylsulfanyl)pent-1-en-3-one + phosphate. It functions in the pathway amino-acid biosynthesis; L-methionine biosynthesis via salvage pathway; L-methionine from S-methyl-5-thio-alpha-D-ribose 1-phosphate: step 2/6. Its pathway is amino-acid biosynthesis; L-methionine biosynthesis via salvage pathway; L-methionine from S-methyl-5-thio-alpha-D-ribose 1-phosphate: step 3/6. The protein operates within amino-acid biosynthesis; L-methionine biosynthesis via salvage pathway; L-methionine from S-methyl-5-thio-alpha-D-ribose 1-phosphate: step 4/6. In Arabidopsis thaliana (Mouse-ear cress), this protein is Probable bifunctional methylthioribulose-1-phosphate dehydratase/enolase-phosphatase E1.